The following is a 994-amino-acid chain: Regulator of telomere elongation helicase 1 homolog (994 aa).

A Helicase ATP-binding domain is found at 7–316 (AGIPVHFPFE…DDLMLLKEML (310 aa)). Residue 42 to 49 (SPTGTGKT) coordinates ATP. The [4Fe-4S] cluster site is built by Cys-146, Cys-164, Cys-173, and Cys-209. The DEAH box signature appears at 252–255 (DEAH). Residues 861-887 (SSGLVKIHKRERSSPPGSSQSSSQTAK) are disordered. Residues 874–884 (SPPGSSQSSSQ) are compositionally biased toward low complexity.

It belongs to the helicase family. RAD3/XPD subfamily.

It localises to the nucleus. It catalyses the reaction ATP + H2O = ADP + phosphate + H(+). In terms of biological role, a probable ATP-dependent DNA helicase implicated in DNA repair and the maintenance of genomic stability. Acts as an anti-recombinase to counteract toxic recombination and limit crossover during meiosis. Regulates meiotic recombination and crossover homeostasis by physically dissociating strand invasion events and thereby promotes noncrossover repair by meiotic synthesis dependent strand annealing (SDSA) as well as disassembly of D loop recombination intermediates. This Drosophila ananassae (Fruit fly) protein is Regulator of telomere elongation helicase 1 homolog.